Reading from the N-terminus, the 386-residue chain is Cytoplasmic 60S subunit biogenesis factor ZNF622 (386 aa).

A2 carries the N-acetylalanine modification. U1-type zinc fingers lie at residues 4 to 28 (YTCI…TDWH) and 67 to 91 (TYCT…SRRH). A disordered region spans residues 135 to 237 (AIKAQPSTSP…AEDAEAEESP (103 aa)). Basic and acidic residues predominate over residues 165–176 (GTPERDPTEKPP). Acidic residues predominate over residues 194-235 (EESEEEGEEDDEDWEDIDSDDGLECENPGVEEEDAEDAEAEE). S269 is modified (phosphoserine).

It belongs to the REI1 family. In terms of assembly, homo- and heterodimer. Associates with pre-60S ribosomal particles. Interacts with MELK and MYBL2. Interacts with DNAJC21. Phosphorylated by MELK. The phosphorylation may redirect the protein to the nucleus. Post-translationally, ubiquitinated by HECTD1, leading to its degradation.

It is found in the cytoplasm. The protein localises to the nucleus. Functionally, pre-60S-associated cytoplasmic factor involved in the cytoplasmic maturation of the 60S subunit. This Rattus norvegicus (Rat) protein is Cytoplasmic 60S subunit biogenesis factor ZNF622 (Znf622).